The following is a 135-amino-acid chain: Class I hydrophobin 2 (135 aa).

The first 20 residues, 1–20 (MFARLTSTLFALAAVSAVFA), serve as a signal peptide directing secretion. 4 disulfides stabilise this stretch: C29–C114, C36–C107, C37–C73, and C115–C128. Residues N117 and N132 are each glycosylated (N-linked (GlcNAc...) asparagine).

It belongs to the fungal hydrophobin family. As to quaternary structure, self-assembles to form functional amyloid fibrils called rodlets. Self-assembly into fibrillar rodlets occurs spontaneously at hydrophobic:hydrophilic interfaces and the rodlets further associate laterally to form amphipathic monolayers.

It localises to the secreted. The protein localises to the cell wall. Its function is as follows. Aerial growth, conidiation, and dispersal of filamentous fungi in the environment rely upon a capability of their secreting small amphipathic proteins called hydrophobins (HPBs) with low sequence identity. Class I can self-assemble into an outermost layer of rodlet bundles on aerial cell surfaces, conferring cellular hydrophobicity that supports fungal growth, development and dispersal; whereas Class II form highly ordered films at water-air interfaces through intermolecular interactions but contribute nothing to the rodlet structure. This Coprinopsis cinerea (strain Okayama-7 / 130 / ATCC MYA-4618 / FGSC 9003) (Inky cap fungus) protein is Class I hydrophobin 2.